The primary structure comprises 752 residues: Sialidase 85-1.1 (752 aa).

An N-terminal signal peptide occupies residues 1 to 23 (MSRRVFASAVLLLIVVTMCCGGA). 2 BNR repeats span residues 274–285 (IYSKDNGSTWSL) and 319–330 (YVSRDMGTTWTE). The disordered stretch occupies residues 693-725 (APEPQVKIAPKPAAPAAPAGNEETARETGDGGA). The segment covering 701-711 (APKPAAPAAPA) has biased composition (low complexity).

This sequence belongs to the glycosyl hydrolase 33 family.

The catalysed reaction is Hydrolysis of alpha-(2-&gt;3)-, alpha-(2-&gt;6)-, alpha-(2-&gt;8)- glycosidic linkages of terminal sialic acid residues in oligosaccharides, glycoproteins, glycolipids, colominic acid and synthetic substrates.. In terms of biological role, developmentally regulated neuraminidase implicated in parasite invasion of cells. May contribute to the pathology during T.cruzi infection by cleaving sialic acid from cells of the immune system. In Trypanosoma cruzi, this protein is Sialidase 85-1.1 (SA85-1.1).